Consider the following 211-residue polypeptide: Rho-related GTP-binding protein RhoF (211 aa).

Met1 is subject to N-acetylmethionine. 26–33 provides a ligand contact to GTP; the sequence is GDGGCGKT. The Effector region motif lies at 48-56; sequence YAPSVFEKY. Residues 73–77 and 131–134 each bind GTP; these read DTAGQ and CKTD. Position 208 is a cysteine methyl ester (Cys208). Cys208 carries the S-geranylgeranyl cysteine lipid modification. A propeptide spans 209 to 211 (removed in mature form); the sequence is LLL.

It belongs to the small GTPase superfamily. Rho family.

The protein localises to the cell membrane. It is found in the cytoplasm. It localises to the cytoskeleton. Functionally, plasma membrane-associated small GTPase which cycles between an active GTP-bound and an inactive GDP-bound state. Causes the formation of thin, actin-rich surface projections called filopodia. Functions cooperatively with CDC42 and Rac to generate additional structures, increasing the diversity of actin-based morphology. The chain is Rho-related GTP-binding protein RhoF (RHOF) from Homo sapiens (Human).